Consider the following 159-residue polypeptide: Small ribosomal subunit protein uS5c (159 aa).

Positions 17 to 80 (WEERVVSVQR…TDGKKNVITV (64 aa)) constitute an S5 DRBM domain.

Belongs to the universal ribosomal protein uS5 family. In terms of assembly, part of the 30S ribosomal subunit. Contacts protein S4.

It localises to the plastid. Its subcellular location is the chloroplast. In terms of biological role, with S4 and S12 plays an important role in translational accuracy. This chain is Small ribosomal subunit protein uS5c (rps5), found in Emiliania huxleyi (Coccolithophore).